A 75-amino-acid chain; its full sequence is Large ribosomal subunit protein bL31 (75 aa).

The protein belongs to the bacterial ribosomal protein bL31 family. Type A subfamily. As to quaternary structure, part of the 50S ribosomal subunit.

In terms of biological role, binds the 23S rRNA. In Bradyrhizobium diazoefficiens (strain JCM 10833 / BCRC 13528 / IAM 13628 / NBRC 14792 / USDA 110), this protein is Large ribosomal subunit protein bL31.